The sequence spans 329 residues: DNA-directed RNA polymerase subunit alpha (329 aa).

The interval 1 to 235 (MQGSVTEFLK…EQLEAFVDLR (235 aa)) is alpha N-terminal domain (alpha-NTD). The alpha C-terminal domain (alpha-CTD) stretch occupies residues 249–329 (FDPILLRPVD…NWPPASIADE (81 aa)).

This sequence belongs to the RNA polymerase alpha chain family. In terms of assembly, homodimer. The RNAP catalytic core consists of 2 alpha, 1 beta, 1 beta' and 1 omega subunit. When a sigma factor is associated with the core the holoenzyme is formed, which can initiate transcription.

It carries out the reaction RNA(n) + a ribonucleoside 5'-triphosphate = RNA(n+1) + diphosphate. In terms of biological role, DNA-dependent RNA polymerase catalyzes the transcription of DNA into RNA using the four ribonucleoside triphosphates as substrates. This Shigella dysenteriae serotype 1 (strain Sd197) protein is DNA-directed RNA polymerase subunit alpha.